Consider the following 539-residue polypeptide: MPAIAGPSSSPQKHVVGSRSESIGGVRSAEVNTSRKRKLISDSAAEVSATVVLPVNSISTPMKWKSPRRCAVSIPKTSDEEIKEDSNEKLENPVISVCLEVKSKWNPKDDEQMKAVKEALHVSKAPSTVVCREDEQRRVFEFVKGCMEQKKAGSLYICGCPGTGKSLSMEKVRLQAEEWAKQAGLHCPETVSVNCTSLTKSTDIFSKILGNYESGKKANGSFSPLQQLQRLFSQKQQQSRSKMMLIIADEMDYLITRDRGVLHELFMLTTLPLSRCILIGTVFCVINVHFLKSVSYGQTSFKFKVRICPPGVANAIDLADRFLPKLKSLNCKPLVVTFRAYSKDQILRILQERLVALPFVAFQSNALEICARKVSAASGDMRKALCVCRSALEILEIEVRGSIDQEPKGPVPECQVVKMDHMIAALSKTFKSPIVDTIQSLPQHQQIIVCSAAKAFRGSKKDRTIAELNKLYLEICKSSMITPAGITEFSNMCTVLNDQGILKLSLARDDKLKRVSLRVDEADITFALKEIRFFRNCLL.

The segment at 1 to 40 is disordered; sequence MPAIAGPSSSPQKHVVGSRSESIGGVRSAEVNTSRKRKLI. Positions 35–38 match the Nuclear localization signal motif; the sequence is RKRK.

It belongs to the CDC6/cdc18 family. Highly expressed in roots, flower buds and etiolated seedlings. Expressed in leaves and stems. Highly expressed in proliferating cells such as root meristems, leaf primordia and young growing leaves, as well as cells undergoing endoreduplication cycles.

It localises to the nucleus. May be involved in the initiation of DNA replication. May play a role in endoreduplication. Could act as one of the factors that contributes to maintain endoreduplication competence. The protein is Cell division control protein 6 homolog of Arabidopsis thaliana (Mouse-ear cress).